The sequence spans 352 residues: Rhodopsin (352 aa).

Topologically, residues 1–36 are extracellular; sequence MNGTEGPFFYIPMVNTTGIVRSPYEYPQYYLVNPAA. Asparagine 2 and asparagine 15 each carry an N-linked (GlcNAc...) asparagine glycan. Residues 37 to 61 traverse the membrane as a helical segment; that stretch reads YAALGAYMFFLILTGFPINFLTLYV. Topologically, residues 62–73 are cytoplasmic; that stretch reads TLEHKKLRTALN. The chain crosses the membrane as a helical span at residues 74–96; that stretch reads LILLNLAVADLFMVFGGFTTTMY. The Extracellular portion of the chain corresponds to 97–110; it reads TSMHGYFVLGRLGC. Cysteine 110 and cysteine 187 are oxidised to a cystine. Residues 111–133 traverse the membrane as a helical segment; that stretch reads NVEGFFATLGGEIALWSLVVLAV. Residues 134 to 136 carry the 'Ionic lock' involved in activated form stabilization motif; the sequence is ERW. Residues 134–152 are Cytoplasmic-facing; it reads ERWVVVCKPISNFRFTENH. A helical transmembrane segment spans residues 153–173; the sequence is AIMGVAFSWIMAATCAVPPLV. The Extracellular segment spans residues 174-202; that stretch reads GWSRYIPEGMQCSCGVDYYTRAEGFNNES. A helical transmembrane segment spans residues 203–224; that stretch reads FVIYMFIVHFLAPLIVIFFCYG. The Cytoplasmic portion of the chain corresponds to 225 to 252; sequence RLLCAVKEAAAAQQESETTQRAEREVTR. The helical transmembrane segment at 253 to 274 threads the bilayer; sequence MVIIMVIGFLTSWLPYASVAWY. The Extracellular portion of the chain corresponds to 275–286; the sequence is IFTHQGTEFGPL. The chain crosses the membrane as a helical span at residues 287 to 308; sequence FMTIPAFFAKSSALYNPMIYIC. Lysine 296 carries the post-translational modification N6-(retinylidene)lysine. Residues 309 to 352 are Cytoplasmic-facing; the sequence is MNKQFRHCMITTLCCGKNPFEEEEGASTTKTEASSVSSSSVSPA. S-palmitoyl cysteine attachment occurs at residues cysteine 322 and cysteine 323. The disordered stretch occupies residues 331-352; that stretch reads EEGASTTKTEASSVSSSSVSPA. The span at 342 to 352 shows a compositional bias: low complexity; it reads SSVSSSSVSPA.

It belongs to the G-protein coupled receptor 1 family. Opsin subfamily. Post-translationally, phosphorylated on some or all of the serine and threonine residues present in the C-terminal region. Contains one covalently linked retinal chromophore.

It is found in the membrane. It localises to the cell projection. Its subcellular location is the cilium. The protein resides in the photoreceptor outer segment. Photoreceptor required for image-forming vision at low light intensity. While most salt water fish species use retinal as chromophore, most freshwater fish use 3-dehydroretinal, or a mixture of retinal and 3-dehydroretinal. Light-induced isomerization of 11-cis to all-trans retinal triggers a conformational change that activates signaling via G-proteins. Subsequent receptor phosphorylation mediates displacement of the bound G-protein alpha subunit by arrestin and terminates signaling. The chain is Rhodopsin (rho) from Pomatoschistus minutus (Sand goby).